The primary structure comprises 713 residues: Protein tyrosine phosphatase domain-containing protein 1 (713 aa).

Residues 80–251 form the Tyrosine-protein phosphatase domain; it reads YSSWITDHLL…LVPLRSVFSC (172 aa). The active-site Phosphocysteine intermediate is the cysteine 188.

The protein belongs to the protein-tyrosine phosphatase family. Non-receptor class PTPDC1 subfamily.

In terms of biological role, may play roles in cilia formation and/or maintenance. In Danio rerio (Zebrafish), this protein is Protein tyrosine phosphatase domain-containing protein 1 (ptpdc1).